The primary structure comprises 983 residues: Next to BRCA1 gene 1 protein (983 aa).

The PB1 domain maps to 4-86 (QVTLNVTFKN…NQLQMQVHEG (83 aa)). Serine 117 carries the phosphoserine modification. The tract at residues 126–149 (MKTTEEPTAEARSPVPCDTDKPQD) is disordered. The ZZ-type zinc finger occupies 214–266 (SWHIACSHCQKRIVGVRYQCSLCPSYNICEDCEAGPYSHDTNHILLKFRRPVV). Zn(2+) contacts are provided by cysteine 219, cysteine 222, cysteine 233, cysteine 236, cysteine 242, cysteine 245, histidine 252, and histidine 256. ATG8 family proteins-binding regions lie at residues 544–638 (ASER…PASV) and 745–756 (ASSEDYIIILPE). Threonine 588 carries the phosphothreonine modification. 2 positions are modified to phosphoserine: serine 592 and serine 598. Positions 611-645 (EESEGAGLKASPDSTVLTKRKAETPASVEETEEDL) are disordered. The segment at 768–813 (MYSSALSQPGLERGAEGEPGIESGQEPAEARERLPERESQPKEQSI) is disordered. A compositionally biased stretch (basic and acidic residues) spans 795 to 808 (AEARERLPERESQP). Position 855 is a phosphoserine (serine 855). Residues 867–894 (DHVRGEPRGSTGLANSRQKSCDHSRHHN) form a disordered region. The region spanning 930 to 974 (SEDQTAALMAHLFEMGFCDRQLNLRLLRKHNHNILQVVTELLQVN) is the UBA domain.

As to quaternary structure, homooligomer and heterooligomer. Interacts with TRIM55. Interacts with titin/TTN. Interacts with RNF29, USP8, MAP1LC3A, MAP1LC3B, MAP1LC3C, GABARAP, GABARAPL1 and GABARAPL2. Binds to ubiquitin and ubiquitinated proteins. Interacts with SQSTM1. Interacts with TAX1BP1. Interacts with IRF3; this interaction mediates autophagic degradation of IRF3. Interacts with IL12A and IL12B. Post-translationally, phosphorylated by GSK3A; this phosphorylation inhibits NBR1 involvement in the formation of ubiquitinated protein aggregates.

The protein resides in the cytoplasm. It is found in the cytoplasmic vesicle. It localises to the autophagosome. Its subcellular location is the lysosome. The protein localises to the myofibril. The protein resides in the sarcomere. It is found in the m line. In terms of biological role, ubiquitin-binding autophagy adapter that participates in different processes including host defense or intracellular homeostasis. Possesses a double function during the selective autophagy by acting as a shuttle bringing ubiquitinated proteins to autophagosomes and also by participating in the formation of protein aggregates. Plays a role in the regulation of the innate immune response by modulating type I interferon production and targeting ubiquitinated IRF3 for autophagic degradation. In response to oxidative stress, promotes an increase in SQSTM1 levels, phosphorylation, and body formation by preventing its autophagic degradation. In turn, activates the KEAP1-NRF2/NFE2L2 antioxidant pathway. Also plays non-autophagy role by mediating the shuttle of IL-12 to late endosome for subsequent secretion. The sequence is that of Next to BRCA1 gene 1 protein (Nbr1) from Rattus norvegicus (Rat).